Here is a 71-residue protein sequence, read N- to C-terminus: Protein SlyX homolog (71 aa).

This sequence belongs to the SlyX family.

This chain is Protein SlyX homolog, found in Stutzerimonas stutzeri (strain A1501) (Pseudomonas stutzeri).